Here is a 401-residue protein sequence, read N- to C-terminus: uncharacterized protein (401 aa).

Cys7, Cys13, Cys16, and Cys94 together coordinate [4Fe-4S] cluster. S-adenosyl-L-methionine-binding residues include Gln230, Tyr259, Glu280, and Asp328. The Nucleophile role is filled by Cys355.

This sequence belongs to the class I-like SAM-binding methyltransferase superfamily. RNA M5U methyltransferase family.

This is an uncharacterized protein from Chlamydia caviae (strain ATCC VR-813 / DSM 19441 / 03DC25 / GPIC) (Chlamydophila caviae).